Here is an 881-residue protein sequence, read N- to C-terminus: MKLLSSIEQACDICRLKKLKCSKEKPKCAKCLKNNWECRYSPKTKRSPLTRAHLTEVESRLERLEQLFLLIFPREDLDMILKMDSLQDIKALLTGLFVQDNVNKDAVTDRLASVETDMPLTLRQHRISATSSSEESSNKGQRQLTVSIDSAAHHDNSTIPLDFMPRDALHGFDWSEEDDMSDGLPFLKTDPNNNGFFGDGSLLCILRSIGFKPENYTNSNVNRLPTMITDRYTLASRSTTSRLLQSYLNNFHPYCPIVHSPTLMMLYNNQIEIASKDQWQILFNCILAIGAWCIEGESTDIDVFYYQNAKSHLTSKVFESGSIILVTALHLLSRYTQWRQKTNTSYNFHSFSIRMAISLGLNRDLPSSFSDSSILEQRRRIWWSVYSWEIQLSLLYGRSIQLSQNTISFPSSVDDVQRTTTGPTIYHGIIETARLLQVFTKIYELDKTVTAEKSPICAKKCLMICNEIEEVSRQAPKFLQMDISTTALTNLLKEHPWLSFTRFELKWKQLSLIIYVLRDFFTNFTQKKSQLEQDQNDHQSYEVKRCSIMLSDAAQRTVMSVSSYMDNHNVTPYFAWNCSYYLFNAVLVPIKTLLSNSKSNAENNETAQLLQQINTVLMLLKKLATFKIQTCEKYIQVLEEVCAPFLLSQCAIPLPHISYNNSNGSAIKNIVGSATIAQYPTLPEENVNNISVKYVSPGSVGPSPVPLKSGASFSDLVKLLSNRPPSRNSPVTIPRSTPSHRSVTPFLGQQQQLQSLVPLTPSALFGGANFNQSGNIADSSLSFTFTNSSNGPNLITTQTNSQALSQPIASSNVHDNFMNNEITASKIDDGNNSKPLSPGWTDQTAYNAFGITTGMFNTTTMDDVYNYLFDDEDTPPNPKKE.

Cys11, Cys14, Cys21, Cys28, Cys31, and Cys38 together coordinate Zn(2+). The segment at residues 11-38 (CDICRLKKLKCSKEKPKCAKCLKNNWEC) is a DNA-binding region (zn(2)-C6 fungal-type). Tyr694 bears the Phosphotyrosine mark. A phosphoserine mark is found at Ser696, Ser699, Ser703, and Ser712. The interval 723-743 (RPPSRNSPVTIPRSTPSHRSV) is disordered. The short motif at 862–870 (DDVYNYLFD) is the 9aaTAD element.

In terms of assembly, binds DNA as a homodimer. Interacts directly with the mediator subunits GAL11/MED15 and SRB4/MED17. Post-translationally, association between GAL11 and GAL4 may serve to expedite phosphorylation of GAL4.

The protein localises to the nucleus. Functionally, this protein is a positive regulator for the gene expression of the galactose-induced genes such as GAL1, GAL2, GAL7, GAL10, and MEL1 which code for the enzymes used to convert galactose to glucose. It recognizes a 17 base pair sequence in (5'-CGGRNNRCYNYNCNCCG-3') the upstream activating sequence (UAS-G) of these genes. The protein is Regulatory protein GAL4 (GAL4) of Saccharomyces cerevisiae (strain ATCC 204508 / S288c) (Baker's yeast).